A 360-amino-acid chain; its full sequence is UDP-3-O-acylglucosamine N-acyltransferase (360 aa).

The active-site Proton acceptor is H248.

It belongs to the transferase hexapeptide repeat family. LpxD subfamily. Homotrimer.

The enzyme catalyses a UDP-3-O-[(3R)-3-hydroxyacyl]-alpha-D-glucosamine + a (3R)-hydroxyacyl-[ACP] = a UDP-2-N,3-O-bis[(3R)-3-hydroxyacyl]-alpha-D-glucosamine + holo-[ACP] + H(+). The protein operates within bacterial outer membrane biogenesis; LPS lipid A biosynthesis. In terms of biological role, catalyzes the N-acylation of UDP-3-O-acylglucosamine using 3-hydroxyacyl-ACP as the acyl donor. Is involved in the biosynthesis of lipid A, a phosphorylated glycolipid that anchors the lipopolysaccharide to the outer membrane of the cell. This chain is UDP-3-O-acylglucosamine N-acyltransferase, found in Chlamydia pneumoniae (Chlamydophila pneumoniae).